We begin with the raw amino-acid sequence, 290 residues long: D-tagatose 3-epimerase (290 aa).

C66 contributes to the substrate binding site. E152 functions as the Proton donor/acceptor in the catalytic mechanism. A Mn(2+)-binding site is contributed by E152. Residues E158 and 185–188 contribute to the substrate site; that span reads DTFH. Mn(2+) contacts are provided by D185 and H211. R217 lines the substrate pocket. The Proton donor/acceptor role is filled by E246. A Mn(2+)-binding site is contributed by E246.

This sequence belongs to the hyi family. As to quaternary structure, homodimer. Requires Mn(2+) as cofactor.

It carries out the reaction keto-D-tagatose = keto-D-sorbose. The catalysed reaction is D-allulose = keto-D-fructose. The enzyme catalyses D-ribulose = D-xylulose. Its activity is regulated as follows. Strongly inhibited (about 90% of the enzyme activity) by Ag(+), Hg(2+) and p-chloromercuribenzoic acid. Cu(2+) and Zn(2+) inhibit about 60% of the enzyme activity. Its function is as follows. Catalyzes the epimerization of various ketoses at the C(3) position. It is able to interconvert D-tagatose and D-ribulose to D-sorbose and D-xylulose, respectively. The enzyme is also able to accept other ketopentoses such as D-psicose with lower efficiency. In Pseudomonas cichorii, this protein is D-tagatose 3-epimerase.